A 163-amino-acid chain; its full sequence is Putative protein CASTOR3P (163 aa).

Belongs to the GATS family.

The sequence is that of Putative protein CASTOR3P from Homo sapiens (Human).